The sequence spans 176 residues: Centromere protein R (176 aa).

A Glycyl lysine isopeptide (Lys-Gly) (interchain with G-Cter in SUMO2) cross-link involves residue lysine 8. At serine 17 the chain carries Phosphoserine. The segment at 20–50 (PSKIMRKKSITAFSPTTGTYQLSPFSSPRTP) is DD1. A Glycyl lysine isopeptide (Lys-Gly) (interchain with G-Cter in SUMO2) cross-link involves residue lysine 22. Serine 28 is subject to Phosphoserine. Residues 34-48 (PTTGTYQLSPFSSPR) show a composition bias toward polar residues. The tract at residues 34–80 (PTTGTYQLSPFSSPRTPKEQEHRDGPSNGTRKWSVLSSPARQDSTVK) is disordered. Basic and acidic residues predominate over residues 49 to 58 (TPKEQEHRDG). Residues 60–80 (SNGTRKWSVLSSPARQDSTVK) are compositionally biased toward polar residues. The short motif at 63–66 (TRKW) is the Nuclear localization signal element. Serine 71 carries the phosphoserine modification. The stretch at 82-112 (SDGFMMLLSKIERSSEKTMEIMKNLSSLQAL) forms a coiled coil. The short motif at 118-122 (LEDLL) is the LXXLL motif element. The LXXIL motif signature appears at 171–175 (LKAIL).

As to quaternary structure, homodimer; mediated by the coiled coil domain. Interacts with CCNA2 and MTA1. Interacts with NFKB1 NF-kappa-B subunit. Component of the CENPA-CAD complex, composed of CENPI, CENPK, CENPL, CENPO, CENPP, CENPQ, CENPR and CENPS. The CENPA-CAD complex interacts with the CENPA-NAC complex, at least composed of CENPA, CENPC, CENPH, CENPM, CENPN, CENPT and CENPU. Interacts with TASOR.

Its subcellular location is the nucleus. It localises to the chromosome. It is found in the centromere. The protein resides in the kinetochore. Functionally, transcription coregulator that can have both coactivator and corepressor functions. Involved in the coactivation of nuclear receptors for retinoid X (RXRs) and thyroid hormone (TRs) in a ligand-dependent fashion. In contrast, it does not coactivate nuclear receptors for retinoic acid, vitamin D, progesterone receptor, nor glucocorticoid. Acts as a coactivator for estrogen receptor alpha. Acts as a transcriptional corepressor via its interaction with the NFKB1 NF-kappa-B subunit, possibly by interfering with the transactivation domain of NFKB1. Induces apoptosis in breast cancer cells, but not in other cancer cells, via a caspase-2 mediated pathway that involves mitochondrial membrane permeabilization but does not require other caspases. May also act as an inhibitor of cyclin A-associated kinase. Also acts a component of the CENPA-CAD (nucleosome distal) complex, a complex recruited to centromeres which is involved in assembly of kinetochore proteins, mitotic progression and chromosome segregation. May be involved in incorporation of newly synthesized CENPA into centromeres via its interaction with the CENPA-NAC complex. This is Centromere protein R (Itgb3bp) from Rattus norvegicus (Rat).